We begin with the raw amino-acid sequence, 173 residues long: Shikimate kinase 2 (173 aa).

Residue 12–17 coordinates ATP; it reads GCGKTT. Mg(2+)-binding residues include T16 and D32. Positions 34, 58, and 79 each coordinate substrate. Positions 112–126 are LID domain; it reads EENPQDNQRPTLTGR. Residue R120 coordinates ATP. Residue R139 coordinates substrate. Q155 is a binding site for ATP.

Belongs to the shikimate kinase family. AroL subfamily. Monomer. Mg(2+) is required as a cofactor.

It localises to the cytoplasm. The catalysed reaction is shikimate + ATP = 3-phosphoshikimate + ADP + H(+). Its pathway is metabolic intermediate biosynthesis; chorismate biosynthesis; chorismate from D-erythrose 4-phosphate and phosphoenolpyruvate: step 5/7. In terms of biological role, catalyzes the specific phosphorylation of the 3-hydroxyl group of shikimic acid using ATP as a cosubstrate. The protein is Shikimate kinase 2 of Pectobacterium carotovorum subsp. carotovorum (strain PC1).